The chain runs to 284 residues: L-ribulose-5-phosphate 3-epimerase UlaE (284 aa).

Belongs to the L-ribulose-5-phosphate 3-epimerase family.

It catalyses the reaction L-ribulose 5-phosphate = L-xylulose 5-phosphate. Its pathway is cofactor degradation; L-ascorbate degradation; D-xylulose 5-phosphate from L-ascorbate: step 3/4. Its function is as follows. Catalyzes the isomerization of L-xylulose-5-phosphate to L-ribulose-5-phosphate. Is involved in the anaerobic L-ascorbate utilization. This chain is L-ribulose-5-phosphate 3-epimerase UlaE, found in Salmonella choleraesuis (strain SC-B67).